The chain runs to 102 residues: Large ribosomal subunit protein uL24 (102 aa).

It belongs to the universal ribosomal protein uL24 family. As to quaternary structure, part of the 50S ribosomal subunit.

One of two assembly initiator proteins, it binds directly to the 5'-end of the 23S rRNA, where it nucleates assembly of the 50S subunit. Functionally, one of the proteins that surrounds the polypeptide exit tunnel on the outside of the subunit. This Burkholderia mallei (strain NCTC 10229) protein is Large ribosomal subunit protein uL24.